Reading from the N-terminus, the 379-residue chain is Cytochrome b (379 aa).

The next 4 helical transmembrane spans lie at F33 to M53, W77 to V98, W113 to L133, and F178 to L198. 2 residues coordinate heme b: H83 and H97. H182 and H196 together coordinate heme b. H201 is a binding site for a ubiquinone. A run of 4 helical transmembrane segments spans residues T226–F246, L288–N308, V320–G340, and F347–P367.

The protein belongs to the cytochrome b family. In terms of assembly, the cytochrome bc1 complex contains 11 subunits: 3 respiratory subunits (MT-CYB, CYC1 and UQCRFS1), 2 core proteins (UQCRC1 and UQCRC2) and 6 low-molecular weight proteins (UQCRH/QCR6, UQCRB/QCR7, UQCRQ/QCR8, UQCR10/QCR9, UQCR11/QCR10 and a cleavage product of UQCRFS1). This cytochrome bc1 complex then forms a dimer. The cofactor is heme b.

Its subcellular location is the mitochondrion inner membrane. Component of the ubiquinol-cytochrome c reductase complex (complex III or cytochrome b-c1 complex) that is part of the mitochondrial respiratory chain. The b-c1 complex mediates electron transfer from ubiquinol to cytochrome c. Contributes to the generation of a proton gradient across the mitochondrial membrane that is then used for ATP synthesis. The chain is Cytochrome b (MT-CYB) from Akodon reigi (Reig's grass mouse).